Here is a 453-residue protein sequence, read N- to C-terminus: Ribulose bisphosphate carboxylase large chain (453 aa).

A propeptide spanning residues 1–2 is cleaved from the precursor; the sequence is MS. Pro-3 bears the N-acetylproline mark. Lys-14 is subject to N6,N6,N6-trimethyllysine. Substrate is bound by residues Asn-123 and Thr-173. Lys-175 acts as the Proton acceptor in catalysis. A substrate-binding site is contributed by Lys-177. Mg(2+)-binding residues include Lys-201, Asp-203, and Glu-204. Lys-201 is modified (N6-carboxylysine). His-294 serves as the catalytic Proton acceptor. Residues Arg-295, His-327, and Ser-379 each contribute to the substrate site.

This sequence belongs to the RuBisCO large chain family. Type I subfamily. As to quaternary structure, heterohexadecamer of 8 large chains and 8 small chains; disulfide-linked. The disulfide link is formed within the large subunit homodimers. Requires Mg(2+) as cofactor. Post-translationally, the disulfide bond which can form in the large chain dimeric partners within the hexadecamer appears to be associated with oxidative stress and protein turnover.

It is found in the plastid. The protein resides in the chloroplast. It carries out the reaction 2 (2R)-3-phosphoglycerate + 2 H(+) = D-ribulose 1,5-bisphosphate + CO2 + H2O. The enzyme catalyses D-ribulose 1,5-bisphosphate + O2 = 2-phosphoglycolate + (2R)-3-phosphoglycerate + 2 H(+). RuBisCO catalyzes two reactions: the carboxylation of D-ribulose 1,5-bisphosphate, the primary event in carbon dioxide fixation, as well as the oxidative fragmentation of the pentose substrate in the photorespiration process. Both reactions occur simultaneously and in competition at the same active site. The chain is Ribulose bisphosphate carboxylase large chain from Galium parisiense (Wall bedstraw).